We begin with the raw amino-acid sequence, 275 residues long: Alpha carbonic anhydrase 7 (275 aa).

A signal peptide spans 1–27 (MVNYSSISCIFFVALFSIFTIVSISSA). N-linked (GlcNAc...) asparagine glycans are attached at residues N3 and N96. Positions 38–272 (REFNYKKNDE…TNKRIVHLYR (235 aa)) constitute an Alpha-carbonic anhydrase domain. An intrachain disulfide couples C63 to C222. Catalysis depends on H104, which acts as the Proton acceptor. 3 residues coordinate Zn(2+): H130, H132, and H149. A substrate-binding site is contributed by 218-219 (TT). N225 carries an N-linked (GlcNAc...) asparagine glycan.

This sequence belongs to the alpha-class carbonic anhydrase family. Requires Zn(2+) as cofactor. In terms of processing, N-glycosylated.

It is found in the plastid. The protein localises to the chloroplast stroma. The enzyme catalyses hydrogencarbonate + H(+) = CO2 + H2O. Reversible hydration of carbon dioxide. This Arabidopsis thaliana (Mouse-ear cress) protein is Alpha carbonic anhydrase 7 (ACA7).